Reading from the N-terminus, the 459-residue chain is Vanillin aminotransferase (459 aa).

Residues 115-116 (GS) and Asp255 each bind pyridoxal 5'-phosphate. Lys284 carries the post-translational modification N6-(pyridoxal phosphate)lysine. 320–321 (FT) serves as a coordination point for pyridoxal 5'-phosphate. The stretch at 428 to 459 (LSLEELDELIRIYGKALKDTEKRVEELKSQKK) forms a coiled coil.

This sequence belongs to the class-III pyridoxal-phosphate-dependent aminotransferase family. Expressed in placental tissue of immature fruit.

The catalysed reaction is vanillin + L-alanine = vanillylamine + pyruvate. Its function is as follows. Involved in the biosynthesis of capsaicinoids natural products, pungent alkaloids synthesized from phenylpropanoid intermediates in the placental tissue of chili pepper fruit acting as repellant on herbivorous mammals and conferring spiciness to hot peppers. Can transfer an amine from alanine to vanillin, forming vanillylamine and pyruvate. The sequence is that of Vanillin aminotransferase from Capsicum frutescens (Cayenne pepper).